We begin with the raw amino-acid sequence, 24 residues long: Brevinin-1Sb (24 aa).

An intrachain disulfide couples cysteine 18 to cysteine 24.

In terms of tissue distribution, expressed by the skin glands.

It is found in the secreted. Functionally, antibacterial activity against Gram-negative bacterium E.coli. The polypeptide is Brevinin-1Sb (Lithobates sphenocephalus (Southern leopard frog)).